Consider the following 310-residue polypeptide: Conjugation stage-specific protein (310 aa).

Belongs to the archaeal Rpo3/eukaryotic RPB3 RNA polymerase subunit family.

The protein localises to the nucleus. May be a stage-specific RNA polymerase subunit. This Tetrahymena thermophila protein is Conjugation stage-specific protein (CNJC).